Here is a 269-residue protein sequence, read N- to C-terminus: Novel plant SNARE 13 (269 aa).

Topologically, residues 1–217 are cytoplasmic; that stretch reads MASNLPMSPQ…IGRQVATDKC (217 aa). Residues 33–94 are a coiled coil; the sequence is DKIKDSTRQS…KQSMIKELNS (62 aa). A Phosphoserine modification is found at Ser-74. The 63-residue stretch at 146–208 folds into the t-SNARE coiled-coil homology domain; sequence MKRMDETDQA…KKASQLVKEI (63 aa). A helical; Anchor for type IV membrane protein transmembrane segment spans residues 218–238; sequence IMGFLFLIVCGVVAIIIVKIV. The Vesicular portion of the chain corresponds to 239–269; it reads NPNNKDIRDIPGLAPPAQSRKLLYLRNQDYM.

The protein belongs to the novel plant SNARE family.

The protein localises to the membrane. Its function is as follows. Vesicle trafficking protein that functions in the secretory pathway. This is Novel plant SNARE 13 (NPSN13) from Arabidopsis thaliana (Mouse-ear cress).